Here is a 418-residue protein sequence, read N- to C-terminus: Tyrosine--tRNA ligase (418 aa).

Position 38 (tyrosine 38) interacts with L-tyrosine. Positions 43–52 (CTARSLHIGS) match the 'HIGH' region motif. Positions 175 and 179 each coordinate L-tyrosine. The 'KMSKS' region signature appears at 235–239 (KMGKT). Lysine 238 contributes to the ATP binding site. The 66-residue stretch at 348–413 (LSVVKLLQVS…CGKKRHLKVV (66 aa)) folds into the S4 RNA-binding domain.

The protein belongs to the class-I aminoacyl-tRNA synthetase family. TyrS type 1 subfamily. Homodimer.

Its subcellular location is the cytoplasm. The enzyme catalyses tRNA(Tyr) + L-tyrosine + ATP = L-tyrosyl-tRNA(Tyr) + AMP + diphosphate + H(+). Its function is as follows. Catalyzes the attachment of tyrosine to tRNA(Tyr) in a two-step reaction: tyrosine is first activated by ATP to form Tyr-AMP and then transferred to the acceptor end of tRNA(Tyr). The sequence is that of Tyrosine--tRNA ligase from Ehrlichia ruminantium (strain Gardel).